A 202-amino-acid polypeptide reads, in one-letter code: Small ribosomal subunit protein uS4 (202 aa).

A disordered region spans residues 18–44 (LPGLTRKSARREYPPGQHGQGRRKRSE). An S4 RNA-binding domain is found at 90 to 152 (MRLDNTVFRL…DRSRKLIEAN (63 aa)).

It belongs to the universal ribosomal protein uS4 family. In terms of assembly, part of the 30S ribosomal subunit. Contacts protein S5. The interaction surface between S4 and S5 is involved in control of translational fidelity.

Its function is as follows. One of the primary rRNA binding proteins, it binds directly to 16S rRNA where it nucleates assembly of the body of the 30S subunit. With S5 and S12 plays an important role in translational accuracy. This Picosynechococcus sp. (strain ATCC 27264 / PCC 7002 / PR-6) (Agmenellum quadruplicatum) protein is Small ribosomal subunit protein uS4.